The primary structure comprises 561 residues: Amidophosphoribosyltransferase 2, chloroplastic (561 aa).

The span at 1 to 27 (MAATSSISSSLSLNAKPNKLSNNNNNN) shows a compositional bias: low complexity. The tract at residues 1 to 36 (MAATSSISSSLSLNAKPNKLSNNNNNNKPHRFLRNP) is disordered. A chloroplast-targeting transit peptide spans 1-53 (MAATSSISSSLSLNAKPNKLSNNNNNNKPHRFLRNPFLNPSSSSFSPLPASIS). Cysteine 87 serves as the catalytic Nucleophile. The Glutamine amidotransferase type-2 domain maps to 87 to 307 (CGVVGIYGDS…PGEVLVVDKD (221 aa)). Residues cysteine 323, cysteine 469, cysteine 520, and cysteine 523 each contribute to the [4Fe-4S] cluster site.

This sequence in the C-terminal section; belongs to the purine/pyrimidine phosphoribosyltransferase family. [4Fe-4S] cluster serves as cofactor. Requires Mg(2+) as cofactor. Mostly expressed in leaves, and, to a lower extent, in cotyledons.

It localises to the plastid. It is found in the chloroplast stroma. The catalysed reaction is 5-phospho-beta-D-ribosylamine + L-glutamate + diphosphate = 5-phospho-alpha-D-ribose 1-diphosphate + L-glutamine + H2O. It functions in the pathway purine metabolism; IMP biosynthesis via de novo pathway; N(1)-(5-phospho-D-ribosyl)glycinamide from 5-phospho-alpha-D-ribose 1-diphosphate: step 1/2. Its activity is regulated as follows. Inhibited by the phenyltriazole acetic acid compound [5-(4-chlorophenyl)-1-isopropyl-1H-[1,2,4]triazol-3-yl]-acetic acid (DAS734), a bleaching herbicide. Functionally, catalyzes the first committed step of 'de novo purine biosynthesis from glutamine. Required for chloroplast biogenesis and cell division. Confers sensitivity to the phenyltriazole acetic acid compound [5-(4-chlorophenyl)-1-isopropyl-1H-[1,2,4]triazol-3-yl]-acetic acid (DAS734), a bleaching herbicide. This is Amidophosphoribosyltransferase 2, chloroplastic (ASE2) from Arabidopsis thaliana (Mouse-ear cress).